Consider the following 447-residue polypeptide: FAD-dependent monooxygenase tropB (447 aa).

The helical transmembrane segment at 12–32 (PLSVGIVGGGIIGVILAAGLV) threads the bilayer. FAD-binding residues include glutamate 42, alanine 55, and arginine 124. A glycan (N-linked (GlcNAc...) asparagine) is linked at asparagine 153. Residues arginine 206 and tyrosine 239 contribute to the active site. Residue asparagine 243 is glycosylated (N-linked (GlcNAc...) asparagine). Positions 322 and 335 each coordinate FAD.

The protein belongs to the paxM FAD-dependent monooxygenase family. It depends on FAD as a cofactor.

Its subcellular location is the membrane. It participates in secondary metabolite biosynthesis. Functionally, FAD-dependent monooxygenase; part of the gene cluster that mediates the biosynthesis of the tropolone class of fungal maleic anhydrides. Within the pathway, tropB catalyzes a synthetically challenging asymmetric oxidative dearomatization reaction to convert 3-methylorcinaldehyde into a hydroxycyclohexadione. The pathway begins with the synthesis of 3-methylorcinaldehyde by the non-reducing polyketide synthase (PKS) tropA. 3-methylorcinaldehyde is the substrate for the FAD-dependent monooxygenase tropB to yield a dearomatized hydroxycyclohexadione. The 2-oxoglutarate-dependent dioxygenase tropC then performs the oxidative ring expansion to provide the first tropolone metabolite stipitaldehyde. Trop D converts stipitaldehyde into stipitacetal which is in turn converted to stipitalide by the short-chain dehydrogenase/reductase tropE. The next steps involve tropF, tropG, tropH, tropI and tropJ to form successive tropolone maleic anhydrides including stipitaldehydic, stipitatonic and stipitatic acids. This Talaromyces stipitatus (strain ATCC 10500 / CBS 375.48 / QM 6759 / NRRL 1006) (Penicillium stipitatum) protein is FAD-dependent monooxygenase tropB.